The primary structure comprises 569 residues: Phosphoglucomutase 2 (569 aa).

The disordered stretch occupies residues 1-23 (MSFQIETVPTKPYEDQKPGTSGL). At Ser-2 the chain carries N-acetylserine. An alpha-D-glucose 1,6-bisphosphate-binding site is contributed by Arg-24. Residues Thr-111 and Thr-117 each carry the phosphothreonine modification. Ser-119 lines the alpha-D-glucose 1,6-bisphosphate pocket. Ser-119 (phosphoserine intermediate) is an active-site residue. Mg(2+)-binding residues include Ser-119, Asp-290, Asp-292, and Asp-294. Ser-119 is modified (phosphoserine). Positions 294, 295, 359, 378, 380, and 391 each coordinate alpha-D-glucose 1,6-bisphosphate.

This sequence belongs to the phosphohexose mutase family. Monomer. Mg(2+) is required as a cofactor. Zn(2+) serves as cofactor. O-glycosylated with mannose residues. Substrate of UDP-glucose--glycoprotein glucose phosphotransferase, linking glucose in a phosphodiester linkage to O-linked mannose.

Its subcellular location is the cytoplasm. It carries out the reaction alpha-D-glucose 1-phosphate = alpha-D-glucose 6-phosphate. It catalyses the reaction O-phospho-L-seryl-[protein] + alpha-D-glucose 1-phosphate = alpha-D-glucose 1,6-bisphosphate + L-seryl-[protein]. The enzyme catalyses alpha-D-glucose 1,6-bisphosphate + L-seryl-[protein] = O-phospho-L-seryl-[protein] + alpha-D-glucose 6-phosphate. Major phosphoglucomutase isozyme that catalyzes the reversible isomerization of alpha-D-glucose 1-phosphate to alpha-D-glucose 6-phosphate. The mechanism proceeds via the intermediate compound alpha-D-glucose 1,6-bisphosphate. Constitutes about 80-90% of the phosphoglucomutase activity in the cell. Key enzyme in hexose metabolism. The forward reaction is an essential step in the energy metabolism of galactose since the product of the galactose pathway enzymes in yeast is glucose 1-phosphate. The reverse reaction is an essential step for biosynthesis when carbon sources other than galactose are the energy source because glucose 1-phosphate is the starting point for the synthesis of UDP-glucose, which acts as a precursor for the synthesis of oligosaccharides and trehalose. This is Phosphoglucomutase 2 from Saccharomyces cerevisiae (strain ATCC 204508 / S288c) (Baker's yeast).